We begin with the raw amino-acid sequence, 1578 residues long: E3 ubiquitin-protein ligase HECW2 (1578 aa).

Phosphoserine is present on serine 48. In terms of domain architecture, C2 spans 171 to 298 (MEGGASGSLH…LERQAGDQML (128 aa)). Disordered regions lie at residues 341-453 (HTVN…FPTD) and 496-802 (IDDG…PSVR). Positions 386-406 (RTSSTLEIDTEDLISTSSRNS) are enriched in polar residues. Residues 518–532 (ASIHETASLEERLEN) are compositionally biased toward basic and acidic residues. The segment covering 559–576 (SADQGSTELCSSQEVDQP) has biased composition (polar residues). Residues 577 to 593 (TSGADAGASDTSGGSRR) show a composition bias toward low complexity. 3 stretches are compositionally biased toward polar residues: residues 597–614 (ETES…SSET), 643–664 (SSCN…SSLE), and 688–708 (PTSS…SSLP). Low complexity-rich tracts occupy residues 721-735 (AAEA…ELGE), 746-755 (AAAAAPAAAA), and 769-782 (AQGA…QEEG). The interval 737–1074 (WQRRGSLEGA…PRPSSTFNTV (338 aa)) is interaction with TP73. Residues 813–846 (EALPPNWEARIDSHGRIFYVDHVNRTTTWQRPTA) enclose the WW 1 domain. Residues 853–880 (LQRSNSIQQMEQLNRRYQSIRRTMTNER) are a coiled coil. Phosphoserine is present on residues serine 858 and serine 915. The WW 2 domain occupies 991 to 1024 (LELPRGWEMKHDHQGKAFFVDHNSRTTTFIDPRL). 2 disordered regions span residues 1030–1075 (RPTS…NTVS) and 1167–1193 (CQSP…RAPA). A compositionally biased stretch (basic residues) spans 1037 to 1046 (HRQHLTRQRS). Over residues 1167 to 1187 (CQSPRGSPVSSPQNSPGTQRA) the composition is skewed to polar residues. Serine 1181 is modified (phosphoserine). Positions 1243–1578 (SRKDLQRNKL…VEETSTFGLE (336 aa)) constitute an HECT domain. Cysteine 1546 serves as the catalytic Glycyl thioester intermediate.

As to quaternary structure, interacts with TP73. Interacts with FZR1.

It localises to the cytoplasm. Its subcellular location is the cytoskeleton. The protein resides in the spindle. The enzyme catalyses S-ubiquitinyl-[E2 ubiquitin-conjugating enzyme]-L-cysteine + [acceptor protein]-L-lysine = [E2 ubiquitin-conjugating enzyme]-L-cysteine + N(6)-ubiquitinyl-[acceptor protein]-L-lysine.. It participates in protein modification; protein ubiquitination. Functionally, E3 ubiquitin-protein ligase that mediates ubiquitination of TP73. Acts to stabilize TP73 and enhance activation of transcription by TP73. Involved in the regulation of mitotic metaphase/anaphase transition. The polypeptide is E3 ubiquitin-protein ligase HECW2 (Hecw2) (Mus musculus (Mouse)).